We begin with the raw amino-acid sequence, 463 residues long: T-box transcription factor TBX1 (463 aa).

Disordered stretches follow at residues 39–58 and 75–103; these read SPSP…PCSA and GASS…PVKK. Residues 75-97 are compositionally biased toward low complexity; sequence GASSSSCASSTPGSGSTGSSGSS. The segment at residues 119–297 is a DNA-binding region (T-box); it reads LWDEFNQLGT…SNPFAKGFRD (179 aa). Disordered stretches follow at residues 320 to 354 and 367 to 405; these read RSRN…PLHG and SPSL…LHHH. A compositionally biased stretch (polar residues) spans 323-332; that stretch reads NPVSSPPQNG. Residues 333–347 are compositionally biased toward basic and acidic residues; the sequence is SDKDGDGRREYERDT. Positions 367-380 are enriched in low complexity; that stretch reads SPSLPVPGGLVPLS. The Nuclear localization signal motif lies at 420 to 431; sequence KTRPAPYPLPSI.

As to quaternary structure, binds DNA as a dimer. Interacts with dscr6/ripply3.

The protein localises to the nucleus. Probable transcriptional regulator involved in developmental processes. Binds to the palindromic T site 5'-TTCACACCTAGGTGTGAA-3' DNA sequence. Induces pre-placodal ectoderm (PPE) gene expression in regions where RIPPLY3 is absent. Plays a role in the formation of the anteroposterior (AP) axis during embryonic development; required to establish the posterolateral border of the pre-placodal ectoderm (PPE) acting downstream of the retinoic acid receptor (RAR) signaling. This is T-box transcription factor TBX1 (tbx1) from Xenopus tropicalis (Western clawed frog).